A 266-amino-acid chain; its full sequence is Sesquipedalian-1 (266 aa).

The 97-residue stretch at Pro-17–Phe-113 folds into the PH domain. Positions Gln-165–Ala-184 are disordered. Ser-183 bears the Phosphoserine mark. The short motif at Ser-191–Val-203 is the F&amp;H element.

This sequence belongs to the sesquipedalian family. Forms homodimers and heterodimers with PHETA2. Interacts with OCRL and INPP5B. Interaction with OCRL may be important for endosomal morphology and function.

It is found in the early endosome. The protein localises to the recycling endosome. Its subcellular location is the golgi apparatus. It localises to the trans-Golgi network. The protein resides in the cytoplasmic vesicle. It is found in the clathrin-coated vesicle. In terms of biological role, plays a role in endocytic trafficking. Required for receptor recycling from endosomes, both to the trans-Golgi network and the plasma membrane. The sequence is that of Sesquipedalian-1 from Mus musculus (Mouse).